We begin with the raw amino-acid sequence, 549 residues long: Sorting nexin-33 (549 aa).

The region spanning 1–61 (MALKARALYS…PASYVEILRP (61 aa)) is the SH3 domain. The segment covering 66 to 83 (VQVDYSGHTQGYTDSPHQ) has biased composition (polar residues). The interval 66–137 (VQVDYSGHTQ…RPEYTHRPRP (72 aa)) is disordered. Positions 86 to 101 (YDDDEEDDDDWDDWDD) are enriched in acidic residues. The segment covering 110 to 119 (SGSNGVSRSQ) has biased composition (polar residues). The span at 127 to 137 (PRPEYTHRPRP) shows a compositional bias: basic and acidic residues. The 111-residue stretch at 205–315 (FSCSVEEPTK…HFLSCQDEKQ (111 aa)) folds into the PX domain. Residues 346–549 (LQDVEERVDV…EKTLHMYDDL (204 aa)) form the BAR domain.

Belongs to the sorting nexin family.

Its subcellular location is the cytoplasm. The protein resides in the cytosol. It localises to the membrane. It is found in the cytoplasmic vesicle membrane. Its function is as follows. Plays a role in the reorganization of the cytoskeleton, endocytosis and cellular vesicle trafficking, both during interphase and at the end of mitotic cell divisions. Required for efficient progress through mitosis and cytokinesis. Required for normal formation of the cleavage furrow at the end of mitosis. Modulates endocytosis of cell-surface proteins. Promotes membrane tubulation (in vitro). May promote the formation of macropinosomes. This Xenopus tropicalis (Western clawed frog) protein is Sorting nexin-33 (snx33).